The chain runs to 98 residues: Molybdopterin synthase sulfur carrier subunit (98 aa).

At glycine 98 the chain carries 1-thioglycine; alternate. Position 98 is a glycyl adenylate; alternate (glycine 98).

The protein belongs to the MoaD family. MOCS2A subfamily. Heterotetramer; composed of 2 small (MOCS2A) and 2 large (MOCS2B) subunits. Post-translationally, C-terminal thiocarboxylation occurs in 2 steps, it is first acyl-adenylated (-COAMP) via the hesA/moeB/thiF part of MOCS3, then thiocarboxylated (-COSH) via the rhodanese domain of MOCS3.

The protein localises to the cytoplasm. It participates in cofactor biosynthesis; molybdopterin biosynthesis. In terms of biological role, acts as a sulfur carrier required for molybdopterin biosynthesis. Component of the molybdopterin synthase complex that catalyzes the conversion of precursor Z into molybdopterin by mediating the incorporation of 2 sulfur atoms into precursor Z to generate a dithiolene group. In the complex, serves as sulfur donor by being thiocarboxylated (-COSH) at its C-terminus by MOCS3. After interaction with MOCS2B, the sulfur is then transferred to precursor Z to form molybdopterin. This chain is Molybdopterin synthase sulfur carrier subunit, found in Aedes aegypti (Yellowfever mosquito).